The primary structure comprises 129 residues: Small ribosomal subunit protein uS11 (129 aa).

This sequence belongs to the universal ribosomal protein uS11 family. As to quaternary structure, part of the 30S ribosomal subunit. Interacts with proteins S7 and S18. Binds to IF-3.

Its function is as follows. Located on the platform of the 30S subunit, it bridges several disparate RNA helices of the 16S rRNA. Forms part of the Shine-Dalgarno cleft in the 70S ribosome. This chain is Small ribosomal subunit protein uS11, found in Hyphomonas neptunium (strain ATCC 15444).